Consider the following 147-residue polypeptide: Angiogenin (147 aa).

A signal peptide spans 1 to 24 (MVILLGPLLLVFMLGLGLAPLSLA). H37 serves as the catalytic Proton acceptor. TRNA-binding residues include R45 and D46. 3 disulfides stabilise this stretch: C50–C104, C63–C115, and C81–C130. The Nucleolar localization signal motif lies at 55-59 (KQRGL). TRNA is bound by residues C104 and I126. Residue H137 is the Proton donor of the active site.

The protein belongs to the pancreatic ribonuclease family. As to quaternary structure, homodimer. Interacts with RNH1; inhibiting ANG ribonuclease activity. Interacts with PCNA.

The protein resides in the secreted. Its subcellular location is the nucleus. It is found in the nucleolus. The protein localises to the cytoplasm. It localises to the stress granule. With respect to regulation, has weak tRNA ribonuclease activity by itself due to partial autoinhibition by its C-terminus, which folds into a short alpha-helix that partially occludes the substrate-binding site. In absence of stress, the ribonuclease activity is inhibited by RNH1 in the cytoplasm. In response to stress, dissociates from RNH1 in the cytoplasm and associates with cytoplasmic ribosomes with vacant A-sites: ribosomes directly activate the tRNA ribonuclease activity of ANG by refolding the C-terminal alpha-helix. In response to stress, the angiogenic activity of ANG is inhibited by RNH1 in the nucleus. Functionally, secreted ribonuclease that can either promote or restrict cell proliferation of target cells, depending on the context. Endocytosed in target cells via its receptor PLXNB2 and translocates to the cytoplasm or nucleus. Under stress conditions, localizes to the cytoplasm and promotes the assembly of stress granules (SGs): specifically cleaves a subset of tRNAs within anticodon loops to produce tRNA-derived stress-induced fragments (tiRNAs), resulting in translation repression and inhibition of cell proliferation. tiRNas also prevent formation of apoptosome, thereby promoting cell survival. Preferentially cleaves RNAs between a pyrimidine and an adenosine residue, suggesting that it cleaves the anticodon loop of tRNA(Ala) (32-UUAGCAU-38) after positions 33 and 36. Cleaves a subset of tRNAs, including tRNA(Ala), tRNA(Glu), tRNA(Gly), tRNA(Lys), tRNA(Val), tRNA(His), tRNA(Asp) and tRNA(Sec). Under growth conditions and in differentiated cells, translocates to the nucleus and stimulates ribosomal RNA (rRNA) transcription, including that containing the initiation site sequences of 45S rRNA, thereby promoting cell growth and proliferation. Angiogenin induces vascularization of normal and malignant tissues via its ability to promote rRNA transcription. Involved in hematopoietic stem and progenitor cell (HSPC) growth and survival by promoting rRNA transcription in growth conditions and inhibiting translation in response to stress, respectively. Mediates the crosstalk between myeloid and intestinal epithelial cells to protect the intestinal epithelial barrier integrity: secreted by myeloid cells and promotes intestinal epithelial cells proliferation and survival. Also mediates osteoclast-endothelial cell crosstalk in growing bone: produced by osteoclasts and protects the neighboring vascular cells against senescence by promoting rRNA transcription. The protein is Angiogenin (ANG) of Sus scrofa (Pig).